The following is a 1016-amino-acid chain: FHIP family protein Bm1_18400 (1016 aa).

2 disordered regions span residues 586-608 and 757-778; these read DSLRQHTPPPELGEQESSSRSSF and SDGFKSDTNNDNDDEDPAPLGK.

Belongs to the FHIP family.

The protein is FHIP family protein Bm1_18400 of Brugia malayi (Filarial nematode worm).